The primary structure comprises 558 residues: Glutamine--tRNA ligase (558 aa).

The 'HIGH' region motif lies at 34-44 (PEPNGYLHIGH). ATP-binding positions include 35–37 (EPN) and 41–47 (HIGHAKS). Aspartate 67 and tyrosine 212 together coordinate L-glutamine. Residues threonine 231, 261–262 (RL), and 269–271 (LSK) each bind ATP. Residues 268-272 (VLSKR) carry the 'KMSKS' region motif.

The protein belongs to the class-I aminoacyl-tRNA synthetase family. Monomer.

Its subcellular location is the cytoplasm. It carries out the reaction tRNA(Gln) + L-glutamine + ATP = L-glutaminyl-tRNA(Gln) + AMP + diphosphate. This Pseudoalteromonas atlantica (strain T6c / ATCC BAA-1087) protein is Glutamine--tRNA ligase.